Reading from the N-terminus, the 363-residue chain is Dihydroorotate dehydrogenase (quinone) (363 aa).

Residues 62–66 (AGYDK) and threonine 86 contribute to the FMN site. Residue lysine 66 coordinates substrate. A substrate-binding site is contributed by 111-115 (NRLGF). Positions 140 and 171 each coordinate FMN. Asparagine 171 serves as a coordination point for substrate. The active-site Nucleophile is the serine 174. Residue asparagine 176 coordinates substrate. FMN contacts are provided by lysine 216 and serine 244. 245-246 (NT) is a binding site for substrate. FMN-binding positions include glycine 267, glycine 296, and 317–318 (YS).

Belongs to the dihydroorotate dehydrogenase family. Type 2 subfamily. In terms of assembly, monomer. The cofactor is FMN.

The protein localises to the cell membrane. It catalyses the reaction (S)-dihydroorotate + a quinone = orotate + a quinol. The protein operates within pyrimidine metabolism; UMP biosynthesis via de novo pathway; orotate from (S)-dihydroorotate (quinone route): step 1/1. In terms of biological role, catalyzes the conversion of dihydroorotate to orotate with quinone as electron acceptor. This chain is Dihydroorotate dehydrogenase (quinone), found in Allorhizobium ampelinum (strain ATCC BAA-846 / DSM 112012 / S4) (Agrobacterium vitis (strain S4)).